Reading from the N-terminus, the 59-residue chain is Ferredoxin (59 aa).

4Fe-4S ferredoxin-type domains follow at residues 2 to 30 (GKIT…LEVN) and 31 to 59 (DHVE…LKVE). The [4Fe-4S] cluster site is built by cysteine 12, cysteine 15, cysteine 18, cysteine 22, cysteine 41, cysteine 44, cysteine 47, and cysteine 51.

It depends on [4Fe-4S] cluster as a cofactor.

Functionally, ferredoxins are iron-sulfur proteins that transfer electrons in a wide variety of metabolic reactions. The protein is Ferredoxin of Entamoeba histolytica (strain ATCC 30459 / HM-1:IMSS / ABRM).